The chain runs to 85 residues: Beta-insect depressant toxin BmKITa (85 aa).

The first 21 residues, 1–21, serve as a signal peptide directing secretion; that stretch reads MKLFLLLLISASMLIDGLVNA. One can recognise an LCN-type CS-alpha/beta domain in the interval 22-82; that stretch reads DGYIRGSNGC…TWKSESNTCG (61 aa). Cystine bridges form between Cys31-Cys81, Cys35-Cys56, Cys42-Cys63, and Cys46-Cys65. A Glycine amide modification is found at Gly82.

In terms of tissue distribution, expressed by the venom gland.

It localises to the secreted. Functionally, depressant insect beta-toxins cause a transient contraction paralysis followed by a slow flaccid paralysis. They bind voltage-independently at site-4 of sodium channels (Nav) and shift the voltage of activation toward more negative potentials thereby affecting sodium channel activation and promoting spontaneous and repetitive firing. This toxin also displays an evident analgesic effect but is devoid of any toxicity on mice. In Olivierus martensii (Manchurian scorpion), this protein is Beta-insect depressant toxin BmKITa.